The following is a 707-amino-acid chain: Polyribonucleotide nucleotidyltransferase (707 aa).

Residues Asp485 and Asp491 each coordinate Mg(2+). A KH domain is found at 552-615; it reads PRITVINIPK…AAIKWIKGIV (64 aa). The S1 motif domain maps to 621 to 689; sequence GEIYEGKVVK…DRGKVKLSMK (69 aa).

Belongs to the polyribonucleotide nucleotidyltransferase family. Requires Mg(2+) as cofactor.

The protein resides in the cytoplasm. It catalyses the reaction RNA(n+1) + phosphate = RNA(n) + a ribonucleoside 5'-diphosphate. In terms of biological role, involved in mRNA degradation. Catalyzes the phosphorolysis of single-stranded polyribonucleotides processively in the 3'- to 5'-direction. The protein is Polyribonucleotide nucleotidyltransferase of Rhodospirillum centenum (strain ATCC 51521 / SW).